Here is a 221-residue protein sequence, read N- to C-terminus: Large ribosomal subunit protein uL3 (221 aa).

The disordered stretch occupies residues G140–S160.

This sequence belongs to the universal ribosomal protein uL3 family. As to quaternary structure, part of the 50S ribosomal subunit. Forms a cluster with proteins L14 and L19.

Functionally, one of the primary rRNA binding proteins, it binds directly near the 3'-end of the 23S rRNA, where it nucleates assembly of the 50S subunit. The protein is Large ribosomal subunit protein uL3 of Chlamydia caviae (strain ATCC VR-813 / DSM 19441 / 03DC25 / GPIC) (Chlamydophila caviae).